Consider the following 352-residue polypeptide: tRNA-specific 2-thiouridylase MnmA (352 aa).

ATP contacts are provided by residues 6–13 and Leu-32; that span reads AMSGGVDS. The active-site Nucleophile is Cys-101. The cysteines at positions 101 and 194 are disulfide-linked. Gly-125 is an ATP binding site. Positions 144–146 are interaction with tRNA; it reads KDQ. The active-site Cysteine persulfide intermediate is Cys-194.

This sequence belongs to the MnmA/TRMU family.

The protein resides in the cytoplasm. The catalysed reaction is S-sulfanyl-L-cysteinyl-[protein] + uridine(34) in tRNA + AH2 + ATP = 2-thiouridine(34) in tRNA + L-cysteinyl-[protein] + A + AMP + diphosphate + H(+). In terms of biological role, catalyzes the 2-thiolation of uridine at the wobble position (U34) of tRNA, leading to the formation of s(2)U34. The polypeptide is tRNA-specific 2-thiouridylase MnmA (Frankia casuarinae (strain DSM 45818 / CECT 9043 / HFP020203 / CcI3)).